The chain runs to 246 residues: Ubiquinone biosynthesis O-methyltransferase (246 aa).

S-adenosyl-L-methionine contacts are provided by arginine 40, glycine 70, aspartate 91, and methionine 135.

Belongs to the methyltransferase superfamily. UbiG/COQ3 family.

It carries out the reaction a 3-demethylubiquinol + S-adenosyl-L-methionine = a ubiquinol + S-adenosyl-L-homocysteine + H(+). The catalysed reaction is a 3-(all-trans-polyprenyl)benzene-1,2-diol + S-adenosyl-L-methionine = a 2-methoxy-6-(all-trans-polyprenyl)phenol + S-adenosyl-L-homocysteine + H(+). Its pathway is cofactor biosynthesis; ubiquinone biosynthesis. Its function is as follows. O-methyltransferase that catalyzes the 2 O-methylation steps in the ubiquinone biosynthetic pathway. This is Ubiquinone biosynthesis O-methyltransferase from Colwellia psychrerythraea (strain 34H / ATCC BAA-681) (Vibrio psychroerythus).